Consider the following 341-residue polypeptide: G2/mitotic-specific cyclin C13-1 (341 aa).

The protein belongs to the cyclin family. Cyclin AB subfamily.

Functionally, essential for the control of the cell cycle at the G2/M (mitosis) transition. Interacts with the CDC2 and CDK2 protein kinases to form MPF. G2/M cyclins accumulate steadily during G2 and are abruptly destroyed at mitosis. The chain is G2/mitotic-specific cyclin C13-1 from Daucus carota (Wild carrot).